We begin with the raw amino-acid sequence, 607 residues long: Glutamine--fructose-6-phosphate aminotransferase [isomerizing] (607 aa).

Residue Cys-2 is the Nucleophile; for GATase activity of the active site. The Glutamine amidotransferase type-2 domain occupies 2–217 (CGIIGILGKK…DGDWAVLTRE (216 aa)). SIS domains are found at residues 277–422 (TVRS…QRGS) and 455–597 (ICRD…VDQP). Lys-602 functions as the For Fru-6P isomerization activity in the catalytic mechanism.

Homodimer.

Its subcellular location is the cytoplasm. It catalyses the reaction D-fructose 6-phosphate + L-glutamine = D-glucosamine 6-phosphate + L-glutamate. Functionally, catalyzes the first step in hexosamine metabolism, converting fructose-6P into glucosamine-6P using glutamine as a nitrogen source. The protein is Glutamine--fructose-6-phosphate aminotransferase [isomerizing] of Bartonella quintana (strain Toulouse) (Rochalimaea quintana).